The primary structure comprises 180 residues: NAD(P)H-quinone oxidoreductase subunit I, chloroplastic (180 aa).

4Fe-4S ferredoxin-type domains follow at residues 55-84 (GRIH…VDWR) and 95-124 (LNYS…MTEE). Residues cysteine 64, cysteine 67, cysteine 70, cysteine 74, cysteine 104, cysteine 107, cysteine 110, and cysteine 114 each coordinate [4Fe-4S] cluster.

The protein belongs to the complex I 23 kDa subunit family. NDH is composed of at least 16 different subunits, 5 of which are encoded in the nucleus. [4Fe-4S] cluster serves as cofactor.

The protein localises to the plastid. The protein resides in the chloroplast thylakoid membrane. The enzyme catalyses a plastoquinone + NADH + (n+1) H(+)(in) = a plastoquinol + NAD(+) + n H(+)(out). It catalyses the reaction a plastoquinone + NADPH + (n+1) H(+)(in) = a plastoquinol + NADP(+) + n H(+)(out). In terms of biological role, NDH shuttles electrons from NAD(P)H:plastoquinone, via FMN and iron-sulfur (Fe-S) centers, to quinones in the photosynthetic chain and possibly in a chloroplast respiratory chain. The immediate electron acceptor for the enzyme in this species is believed to be plastoquinone. Couples the redox reaction to proton translocation, and thus conserves the redox energy in a proton gradient. The sequence is that of NAD(P)H-quinone oxidoreductase subunit I, chloroplastic from Drimys granadensis.